Reading from the N-terminus, the 353-residue chain is Polyprenal reductase 2 (353 aa).

Transmembrane regions (helical) follow at residues 11-31 (PLLCFAWIAATLPIIAAALPI), 78-98 (FMHFYVVGVLATTILLLAIWF), 175-195 (MHIVGYLTGLFYYVAAPLSLA), 234-254 (PLLKLGWTQWIGAVIFIWGSL), 291-308 (YLAELVIYFGMLVASGAE), and 313-335 (WFLFIFVITNLSFAAVETYNWYL).

The protein belongs to the steroid 5-alpha reductase family. Polyprenal reductase subfamily.

The protein localises to the cell membrane. The enzyme catalyses a di-trans,poly-cis-dolichal + NADP(+) = a di-trans,poly-cis-polyprenal + NADPH + H(+). The protein operates within protein modification; protein glycosylation. Its function is as follows. Plays a key role in early steps of protein N-linked glycosylation by being involved in the conversion of polyprenol into dolichol. Acts as a polyprenal reductase that mediates the reduction of polyprenal into dolichal in a NADP-dependent mechanism. Dolichols are required for the synthesis of dolichol-linked monosaccharides and the oligosaccharide precursor used for N-glycosylation. In Oryza sativa subsp. japonica (Rice), this protein is Polyprenal reductase 2.